The following is a 366-amino-acid chain: Ribosomal RNA large subunit methyltransferase M (366 aa).

Residues Ser-187, 220 to 223 (SPGG), Asp-239, Asp-259, and Asp-276 each bind S-adenosyl-L-methionine. Lys-305 serves as the catalytic Proton acceptor.

This sequence belongs to the class I-like SAM-binding methyltransferase superfamily. RNA methyltransferase RlmE family. RlmM subfamily. As to quaternary structure, monomer.

Its subcellular location is the cytoplasm. The enzyme catalyses cytidine(2498) in 23S rRNA + S-adenosyl-L-methionine = 2'-O-methylcytidine(2498) in 23S rRNA + S-adenosyl-L-homocysteine + H(+). Functionally, catalyzes the 2'-O-methylation at nucleotide C2498 in 23S rRNA. In Tolumonas auensis (strain DSM 9187 / NBRC 110442 / TA 4), this protein is Ribosomal RNA large subunit methyltransferase M.